We begin with the raw amino-acid sequence, 379 residues long: MSDFLPFSRPAMGAEELAAVKTVLDSGWITTGPKNQELEAAFCRLTGNQYAVAVSSATAGMHIALMALGIGEGDEVITPSMTWVSTLNMIVLLGANPVMVDVDRDTLMVTPEHIEAAITPQTKAIIPVHYAGAPADLDAIYALGERYGIPVIEDAAHATGTSYKGRHIGARGTAIFSFHAIKNITCAEGGIVVTDNPQFADKLRSLKFHGLGVDAWDRQSGGRAPQAEVLAPGYKYNLPDLNAAIALAQLQKLDALNARRAAIAAQYHQAMADLPFQPLSLPSWEHIHAWHLFIIRVDEARCGITRDALMASLKTKGIGTGLHFRAAHTQKYYRERFPTLTLPDTEWNSERICSLPLFPDMTESDFDRVITALHQIAGQ.

An N6-(pyridoxal phosphate)lysine modification is found at K182.

The protein belongs to the DegT/DnrJ/EryC1 family. ArnB subfamily. In terms of assembly, homodimer. The cofactor is pyridoxal 5'-phosphate.

It carries out the reaction UDP-4-amino-4-deoxy-beta-L-arabinose + 2-oxoglutarate = UDP-beta-L-threo-pentopyranos-4-ulose + L-glutamate. Its pathway is nucleotide-sugar biosynthesis; UDP-4-deoxy-4-formamido-beta-L-arabinose biosynthesis; UDP-4-deoxy-4-formamido-beta-L-arabinose from UDP-alpha-D-glucuronate: step 2/3. It participates in bacterial outer membrane biogenesis; lipopolysaccharide biosynthesis. Catalyzes the conversion of UDP-4-keto-arabinose (UDP-Ara4O) to UDP-4-amino-4-deoxy-L-arabinose (UDP-L-Ara4N). The modified arabinose is attached to lipid A and is required for resistance to polymyxin and cationic antimicrobial peptides. This chain is UDP-4-amino-4-deoxy-L-arabinose--oxoglutarate aminotransferase, found in Salmonella heidelberg (strain SL476).